The following is a 244-amino-acid chain: uncharacterized protein (244 aa).

It belongs to the MtxX family.

This is an uncharacterized protein from Methanocaldococcus jannaschii (strain ATCC 43067 / DSM 2661 / JAL-1 / JCM 10045 / NBRC 100440) (Methanococcus jannaschii).